Here is a 384-residue protein sequence, read N- to C-terminus: Sphingosine 1-phosphate receptor 4 (384 aa).

The Extracellular portion of the chain corresponds to 1–50; the sequence is MNATGTPVAPESCQQLAAGGHSRLIVLHYNHSGRLAGRGGPEDGGLGALR. Residues asparagine 2 and asparagine 30 are each glycosylated (N-linked (GlcNAc...) asparagine). A helical membrane pass occupies residues 51 to 71; the sequence is GLSVAASCLVVLENLLVLAAI. Topologically, residues 72 to 84 are cytoplasmic; the sequence is TSHMRSRRWVYYC. Residues 85-105 traverse the membrane as a helical segment; the sequence is LVNITLSDLLTGAAYLANVLL. The Extracellular segment spans residues 106-117; that stretch reads SGARTFRLAPAQ. Residues 118–138 form a helical membrane-spanning segment; the sequence is WFLREGLLFTALAASTFSLLF. The Cytoplasmic segment spans residues 139–161; it reads TAGERFATMVRPVAESGATKTSR. A helical transmembrane segment spans residues 162–182; the sequence is VYGFIGLCWLLAALLGMLPLL. Over 183 to 206 the chain is Extracellular; it reads GWNCLCAFDRCSSLLPLYSKRYIL. A helical membrane pass occupies residues 207–227; the sequence is FCLVIFAGVLATIMGLYGAIF. The Cytoplasmic segment spans residues 228–252; sequence RLVQASGQKAPRPAARRKARRLLKT. A helical transmembrane segment spans residues 253-273; that stretch reads VLMILLAFLVCWGPLFGLLLA. Residues 274-288 lie on the Extracellular side of the membrane; the sequence is DVFGSNLWAQEYLRG. The helical transmembrane segment at 289 to 309 threads the bilayer; that stretch reads MDWILALAVLNSAVNPIIYSF. Residues 310-384 lie on the Cytoplasmic side of the membrane; the sequence is RSREVCRAVL…LSSISSVRSI (75 aa). A lipid anchor (S-palmitoyl cysteine) is attached at cysteine 323.

Belongs to the G-protein coupled receptor 1 family. In terms of tissue distribution, specifically expressed in fetal and adult lymphoid and hematopoietic tissue as well as in lung. Considerable level of expression in adult and fetal spleen as well as adult peripheral leukocytes and lung. Lower expression in adult thymus, lymph node, bone marrow, and appendix as well as in fetal liver, thymus, and lung.

It is found in the cell membrane. Receptor for the lysosphingolipid sphingosine 1-phosphate (S1P). S1P is a bioactive lysophospholipid that elicits diverse physiological effect on most types of cells and tissues. May be involved in cell migration processes that are specific for lymphocytes. The sequence is that of Sphingosine 1-phosphate receptor 4 (S1PR4) from Homo sapiens (Human).